The primary structure comprises 417 residues: Tyrosine--tRNA ligase (417 aa).

An L-tyrosine-binding site is contributed by tyrosine 40. The short motif at alanine 45–histidine 54 is the 'HIGH' region element. Residues tyrosine 177 and glutamine 181 each contribute to the L-tyrosine site. Positions lysine 237–serine 241 match the 'KMSKS' region motif. Lysine 240 is an ATP binding site. One can recognise an S4 RNA-binding domain in the interval isoleucine 351–lysine 414.

It belongs to the class-I aminoacyl-tRNA synthetase family. TyrS type 1 subfamily. Homodimer.

It localises to the cytoplasm. The enzyme catalyses tRNA(Tyr) + L-tyrosine + ATP = L-tyrosyl-tRNA(Tyr) + AMP + diphosphate + H(+). Its function is as follows. Catalyzes the attachment of tyrosine to tRNA(Tyr) in a two-step reaction: tyrosine is first activated by ATP to form Tyr-AMP and then transferred to the acceptor end of tRNA(Tyr). This is Tyrosine--tRNA ligase from Dinoroseobacter shibae (strain DSM 16493 / NCIMB 14021 / DFL 12).